The primary structure comprises 260 residues: Carbonic anhydrase 3 (260 aa).

An N-acetylalanine modification is found at Ala2. In terms of domain architecture, Alpha-carbonic anhydrase spans 3–259 (KEWGYADHNG…LKGRVVRASF (257 aa)). Phosphoserine is present on residues Ser29, Ser43, Ser50, and Ser55. An involved in proton transfer region spans residues 64–67 (RTCR). Thr73 carries the phosphothreonine modification. Zn(2+) is bound by residues His94, His96, and His119. The residue at position 127 (Tyr127) is a Phosphotyrosine. 2 positions are modified to phosphothreonine: Thr129 and Thr176. 2 positions are modified to S-glutathionyl cysteine: Cys182 and Cys187. Residue 198–199 (TT) participates in substrate binding. A Phosphothreonine modification is found at Thr216. Position 219 is a phosphoserine (Ser219).

Belongs to the alpha-carbonic anhydrase family. The cofactor is Zn(2+). S-thiolated both by thiol-disulfide exchange with glutathione disulfide and by oxyradical-initiated S-thiolation with reduced glutathione. In terms of processing, S-glutathionylated in hepatocytes under oxidative stress.

It localises to the cytoplasm. It catalyses the reaction hydrogencarbonate + H(+) = CO2 + H2O. Inhibited by acetazolamide. Functionally, reversible hydration of carbon dioxide. This chain is Carbonic anhydrase 3 (CA3), found in Equus caballus (Horse).